The following is a 51-amino-acid chain: Large ribosomal subunit protein eL39 (51 aa).

A compositionally biased stretch (basic residues) spans 1 to 19 (MSHNMKGQKKRLAKAHKQN). Residues 1–23 (MSHNMKGQKKRLAKAHKQNSRVP) are disordered.

Belongs to the eukaryotic ribosomal protein eL39 family.

In Methanosarcina mazei (strain ATCC BAA-159 / DSM 3647 / Goe1 / Go1 / JCM 11833 / OCM 88) (Methanosarcina frisia), this protein is Large ribosomal subunit protein eL39.